Consider the following 347-residue polypeptide: Protein-glutamate methylesterase/protein-glutamine glutaminase (347 aa).

A Response regulatory domain is found at 3-119 (EALVVDDSHF…STELSGHSEE (117 aa)). Asp53 carries the post-translational modification 4-aspartylphosphate. A disordered region spans residues 132-154 (PTAGHDVEMEPASPPDATTSEYA). A CheB-type methylesterase domain is found at 152 to 346 (EYADNPTLLI…EAIADSIRRT (195 aa)). Catalysis depends on residues Ser164, His191, and Asp288.

The protein belongs to the CheB family. Post-translationally, phosphorylated by CheA. Phosphorylation of the N-terminal regulatory domain activates the methylesterase activity.

It localises to the cytoplasm. It catalyses the reaction [protein]-L-glutamate 5-O-methyl ester + H2O = L-glutamyl-[protein] + methanol + H(+). The enzyme catalyses L-glutaminyl-[protein] + H2O = L-glutamyl-[protein] + NH4(+). In terms of biological role, involved in the modulation of the chemotaxis system; catalyzes the demethylation of specific methylglutamate residues introduced into the Htr transducer proteins (methyl-accepting chemotaxis proteins) by CheR. Also required for Htr deamidations, at least at a specific glutamine-glutamate pair in HTR-II and a specific aspartate-glutamine pair in Htr4. The protein is Protein-glutamate methylesterase/protein-glutamine glutaminase of Halobacterium salinarum (strain ATCC 29341 / DSM 671 / R1).